The primary structure comprises 536 residues: Xylulose kinase (536 aa).

Substrate is bound by residues histidine 99, arginine 170, aspartate 280, and asparagine 281. ATP-binding positions include tryptophan 355, 441-442 (GA), and asparagine 445.

It belongs to the FGGY kinase family. As to quaternary structure, monomer.

It carries out the reaction D-xylulose + ATP = D-xylulose 5-phosphate + ADP + H(+). In terms of biological role, phosphorylates D-xylulose to produce D-xylulose 5-phosphate, a molecule that may play an important role in the regulation of glucose metabolism and lipogenesis. This Rattus norvegicus (Rat) protein is Xylulose kinase (Xylb).